Here is a 122-residue protein sequence, read N- to C-terminus: Piercer of microtubule wall 2 protein (122 aa).

Positions M1–P23 are enriched in basic and acidic residues. Disordered regions lie at residues M1–P26 and Q99–L122. Residues I113–L122 show a composition bias toward polar residues.

This sequence belongs to the PIERCE2 family. In terms of assembly, microtubule inner protein component of sperm flagellar doublet microtubules. Interacts with CFAP53, ODAD1 and ODAD3; the interactions link the outer dynein arms docking complex (ODA-DC) to the internal microtubule inner proteins (MIP) in cilium axoneme.

Its subcellular location is the cytoplasm. The protein resides in the cytoskeleton. The protein localises to the cilium axoneme. It localises to the flagellum axoneme. Its function is as follows. Microtubule inner protein involved in the attachment of outer dynein arms (ODAs) to dynein-decorated doublet microtubules (DMTs) in cilia axoneme, which is required for motile cilia beating. The protein is Piercer of microtubule wall 2 protein of Mus musculus (Mouse).